The primary structure comprises 372 residues: O-methyltransferase bfoE (372 aa).

Tryptophan 186 provides a ligand contact to S-adenosyl-L-methionine. Histidine 285 acts as the Proton acceptor in catalysis.

The protein belongs to the class I-like SAM-binding methyltransferase superfamily. Cation-independent O-methyltransferase family.

It functions in the pathway secondary metabolite biosynthesis. In terms of biological role, cytochrome P450 monooxygenase; part of the gene cluster that mediates the biosynthesis of bifonsecin B, a dimeric gamma-naphthopyrone. The first step in the biosynthesis of bifonsecin B is the production of gamma-naphthopyrone precursor YWA1 by the non-reducing polyketide synthase albA, via condensation of one acetyl-CoA starter unit with 6 malonyl-CoA units. YWA1 is then methylated by bfoE at position C-6 to yield foncesin which is further methylated at position C-8 by bfoD to produce fonsecin B. A key enzyme in the biosynthetic pathway is the cytochrome P450 monooxygenase bfoB which catalyzes the oxidative dimerization of fonsecin B to bifonsecin B. Bfob also catalyzes the oxidative dimerization of rubrofusarin B into nigerone. The stereoselectivity of bfoB is influenced by the two natural monomeric substrates; homodimerization of fonsecin B yields a stereochemically pure biaryl, M-foncerine B, while rubrofusarin B yields a mixture of enantiomers M- and P-nigerone. This is O-methyltransferase bfoE from Aspergillus brasiliensis (strain CBS 101740 / IMI 381727 / IBT 21946).